We begin with the raw amino-acid sequence, 86 residues long: Small ribosomal subunit protein uS15 (86 aa).

Belongs to the universal ribosomal protein uS15 family. In terms of assembly, part of the 30S ribosomal subunit. Forms a bridge to the 50S subunit in the 70S ribosome, contacting the 23S rRNA.

One of the primary rRNA binding proteins, it binds directly to 16S rRNA where it helps nucleate assembly of the platform of the 30S subunit by binding and bridging several RNA helices of the 16S rRNA. In terms of biological role, forms an intersubunit bridge (bridge B4) with the 23S rRNA of the 50S subunit in the ribosome. This chain is Small ribosomal subunit protein uS15, found in Neorickettsia sennetsu (strain ATCC VR-367 / Miyayama) (Ehrlichia sennetsu).